Here is a 223-residue protein sequence, read N- to C-terminus: Large ribosomal subunit protein bL21 (223 aa).

Belongs to the bacterial ribosomal protein bL21 family. In terms of assembly, part of the 50S ribosomal subunit. Contacts protein L20.

In terms of biological role, this protein binds to 23S rRNA in the presence of protein L20. In Mesorhizobium japonicum (strain LMG 29417 / CECT 9101 / MAFF 303099) (Mesorhizobium loti (strain MAFF 303099)), this protein is Large ribosomal subunit protein bL21.